The primary structure comprises 487 residues: Malonate-semialdehyde dehydrogenase (487 aa).

Positions 150, 152, 176, 179, 180, 229, and 251 each coordinate NAD(+). The active-site Nucleophile is the cysteine 284. An NAD(+)-binding site is contributed by glutamate 382.

Belongs to the aldehyde dehydrogenase family. IolA subfamily. As to quaternary structure, homotetramer.

It catalyses the reaction 3-oxopropanoate + NAD(+) + CoA + H2O = hydrogencarbonate + acetyl-CoA + NADH + H(+). The catalysed reaction is 2-methyl-3-oxopropanoate + NAD(+) + CoA + H2O = propanoyl-CoA + hydrogencarbonate + NADH + H(+). The protein operates within polyol metabolism; myo-inositol degradation into acetyl-CoA; acetyl-CoA from myo-inositol: step 7/7. Its function is as follows. Catalyzes the oxidation of malonate semialdehyde (MSA) and methylmalonate semialdehyde (MMSA) into acetyl-CoA and propanoyl-CoA, respectively. Is involved in a myo-inositol catabolic pathway. Bicarbonate, and not CO2, is the end-product of the enzymatic reaction. This chain is Malonate-semialdehyde dehydrogenase, found in Bacillus subtilis subsp. natto.